The primary structure comprises 194 residues: Xanthine phosphoribosyltransferase (194 aa).

Residues L20 and N27 each contribute to the xanthine site. 128 to 132 (ANGQA) contributes to the 5-phospho-alpha-D-ribose 1-diphosphate binding site. K156 is a binding site for xanthine.

Belongs to the purine/pyrimidine phosphoribosyltransferase family. Xpt subfamily. In terms of assembly, homodimer.

The protein localises to the cytoplasm. It carries out the reaction XMP + diphosphate = xanthine + 5-phospho-alpha-D-ribose 1-diphosphate. It participates in purine metabolism; XMP biosynthesis via salvage pathway; XMP from xanthine: step 1/1. Converts the preformed base xanthine, a product of nucleic acid breakdown, to xanthosine 5'-monophosphate (XMP), so it can be reused for RNA or DNA synthesis. The protein is Xanthine phosphoribosyltransferase of Oceanobacillus iheyensis (strain DSM 14371 / CIP 107618 / JCM 11309 / KCTC 3954 / HTE831).